Consider the following 204-residue polypeptide: B9 domain-containing protein 1 (204 aa).

Positions 9 to 127 (FLLMITGQVE…TIPMFVPEST (119 aa)) constitute a C2 B9-type domain.

The protein belongs to the B9D family. Part of the tectonic-like complex (also named B9 complex).

The protein resides in the cytoplasm. Its subcellular location is the cytoskeleton. The protein localises to the cilium basal body. Component of the tectonic-like complex, a complex localized at the transition zone of primary cilia and acting as a barrier that prevents diffusion of transmembrane proteins between the cilia and plasma membranes. Required for ciliogenesis and sonic hedgehog/SHH signaling. This is B9 domain-containing protein 1 (B9d1) from Mus musculus (Mouse).